The following is a 235-amino-acid chain: uncharacterized protein (235 aa).

Residues leucine 82–proline 221 form the N-acetyltransferase domain.

Belongs to the acetyltransferase family.

It is found in the golgi apparatus membrane. It localises to the endoplasmic reticulum membrane. This is an uncharacterized protein from Schizosaccharomyces pombe (strain 972 / ATCC 24843) (Fission yeast).